We begin with the raw amino-acid sequence, 198 residues long: Transcription factor BHLH133 (198 aa).

Residues 114–127 are basic motif; degenerate; sequence SAESSQSYYAKNRR. The 50-residue stretch at 114-163 folds into the bHLH domain; it reads SAESSQSYYAKNRRQRINERLRILQELIPNGTKVDISTMLEEAIQYVKFL. Residues 128–163 are helix-loop-helix motif; it reads QRINERLRILQELIPNGTKVDISTMLEEAIQYVKFL.

The protein belongs to the bHLH protein family.

Its subcellular location is the nucleus. In terms of biological role, transcription factor that acts as a regulator of iron homeostasis. May act as negative regulator of iron transportation from root to shoot. Does not seem to be involved in the suppression of the induction of iron deficiency responsive genes. The protein is Transcription factor BHLH133 of Oryza sativa subsp. japonica (Rice).